Reading from the N-terminus, the 402-residue chain is Fugralins biosynthesis cluster protein 2 (402 aa).

Transmembrane regions (helical) follow at residues 28-48, 109-129, 145-165, 232-252, and 264-284; these read NCLA…CFLL, ILIF…AILV, IFWW…TAIV, VIFG…AVTV, and LAPL…IVCV. Disordered regions lie at residues 312–335 and 378–402; these read NPNT…TGPK and TQDN…PWGV. Positions 324–334 are enriched in polar residues; that stretch reads TKGSQLSSTGP. Asparagine 381 carries an N-linked (GlcNAc...) asparagine glycan.

This sequence belongs to the SAT4 family.

It localises to the membrane. It functions in the pathway secondary metabolite biosynthesis. In terms of biological role, part of the gene cluster that mediates the biosynthesis of the tetraketides fugralins such as linear fugralin A and cyclic fugralin B, volatile compounds that play a role in the asexual reproductive cycle but are not involved in pathogenicity. One of the key features of fugralins is the presence of a double methyl group, which is only rarely encountered in fungal secondary metabolites. As the fugralins cluster does not contain an independent methyltransferase, the PKS FGR1 is probably responsible for adding two methyl groups to the same carbon atom. Fugralin B is similar to fugralin A except for a cyclization between the carboxylic acid C-8 and the alcohol on C-4 resulting in a six membered lactone ring, probably catalyzed by the cyclase FGR4. The exact role of the individual cluster genes remains unknown and further work is needed to unravel the biosynthetic pathway. This is Fugralins biosynthesis cluster protein 2 from Gibberella zeae (strain ATCC MYA-4620 / CBS 123657 / FGSC 9075 / NRRL 31084 / PH-1) (Wheat head blight fungus).